A 160-amino-acid polypeptide reads, in one-letter code: Cytochrome b6-f complex subunit 4 (160 aa).

3 consecutive transmembrane segments (helical) span residues 36–56 (LLYIFPVVILGSIACCGGLAV), 95–115 (LLGVVLMAAVPAGLIAVPFIE), and 131–151 (AVFLFGTFVAIWLGIGATFPI).

It belongs to the cytochrome b family. PetD subfamily. The 4 large subunits of the cytochrome b6-f complex are cytochrome b6, subunit IV (17 kDa polypeptide, petD), cytochrome f and the Rieske protein, while the 4 small subunits are petG, petL, petM and petN. The complex functions as a dimer.

Its subcellular location is the plastid. The protein localises to the cyanelle thylakoid membrane. Component of the cytochrome b6-f complex, which mediates electron transfer between photosystem II (PSII) and photosystem I (PSI), cyclic electron flow around PSI, and state transitions. This Cyanophora paradoxa protein is Cytochrome b6-f complex subunit 4.